The sequence spans 156 residues: RNA pyrophosphohydrolase (156 aa).

The Nudix hydrolase domain maps to 6 to 148 (NYRPNVAAIV…KKNIYVRVIK (143 aa)). The Nudix box signature appears at 43–64 (GGIDKGESVKNALFRELKEEIG).

The protein belongs to the Nudix hydrolase family. RppH subfamily. A divalent metal cation serves as cofactor.

Its function is as follows. Accelerates the degradation of transcripts by removing pyrophosphate from the 5'-end of triphosphorylated RNA, leading to a more labile monophosphorylated state that can stimulate subsequent ribonuclease cleavage. The chain is RNA pyrophosphohydrolase from Campylobacter jejuni subsp. jejuni serotype O:2 (strain ATCC 700819 / NCTC 11168).